Here is a 287-residue protein sequence, read N- to C-terminus: tRNA pseudouridine synthase B (287 aa).

The Nucleophile role is filled by D38.

Belongs to the pseudouridine synthase TruB family. Type 1 subfamily.

The enzyme catalyses uridine(55) in tRNA = pseudouridine(55) in tRNA. Functionally, responsible for synthesis of pseudouridine from uracil-55 in the psi GC loop of transfer RNAs. The chain is tRNA pseudouridine synthase B from Mycoplasma mobile (strain ATCC 43663 / 163K / NCTC 11711) (Mesomycoplasma mobile).